A 545-amino-acid polypeptide reads, in one-letter code: Pectinesterase/pectinesterase inhibitor (545 aa).

A signal peptide spans 1–37 (MEINQPNLLEASKSCYSKITFFLLVISFAALVSTGFS). The segment at 38–191 (SPELSLHHKI…ILRARTSLAI (154 aa)) is pectinesterase inhibitor. The propeptide occupies 38-228 (SPELSLHHKI…RRLLQTLGKD (191 aa)). Asparagine 135 carries an N-linked (GlcNAc...) asparagine glycan. The interval 232–530 (DIVVAKDGSG…TVAELIQGGS (299 aa)) is pectinesterase. Substrate is bound by residues threonine 307 and glutamine 337. A disulfide bridge links cysteine 326 with cysteine 353. Aspartate 360 (proton donor; for pectinesterase activity) is an active-site residue. N-linked (GlcNAc...) (complex) asparagine glycosylation is present at asparagine 375. Aspartate 381 functions as the Nucleophile; for pectinesterase activity in the catalytic mechanism. Cysteine 394 and cysteine 428 are disulfide-bonded. Substrate is bound by residues arginine 449 and tryptophan 451.

In the N-terminal section; belongs to the PMEI family. This sequence in the C-terminal section; belongs to the pectinesterase family. Post-translationally, N-glycosylated.

It localises to the secreted. It is found in the cell wall. It catalyses the reaction [(1-&gt;4)-alpha-D-galacturonosyl methyl ester](n) + n H2O = [(1-&gt;4)-alpha-D-galacturonosyl](n) + n methanol + n H(+). Its pathway is glycan metabolism; pectin degradation; 2-dehydro-3-deoxy-D-gluconate from pectin: step 1/5. Acts in the modification of cell walls via demethylesterification of cell wall pectin. The polypeptide is Pectinesterase/pectinesterase inhibitor (Ficus pumila var. awkeotsang (Jelly fig)).